A 197-amino-acid polypeptide reads, in one-letter code: Nucleoid occlusion factor SlmA (197 aa).

Positions I7–L67 constitute an HTH tetR-type domain. Positions T30–F49 form a DNA-binding region, H-T-H motif. A coiled-coil region spans residues D109–I136.

Belongs to the nucleoid occlusion factor SlmA family. Homodimer. Interacts with FtsZ.

It localises to the cytoplasm. The protein localises to the nucleoid. Functionally, required for nucleoid occlusion (NO) phenomenon, which prevents Z-ring formation and cell division over the nucleoid. Acts as a DNA-associated cell division inhibitor that binds simultaneously chromosomal DNA and FtsZ, and disrupts the assembly of FtsZ polymers. SlmA-DNA-binding sequences (SBS) are dispersed on non-Ter regions of the chromosome, preventing FtsZ polymerization at these regions. The polypeptide is Nucleoid occlusion factor SlmA (Shewanella baltica (strain OS223)).